The primary structure comprises 399 residues: [Pyruvate dehydrogenase (acetyl-transferring)] kinase, mitochondrial (399 aa).

The N-terminal 18 residues, 1–18 (MFLTRRLLGPFTSAIARK), are a transit peptide targeting the mitochondrion. Residues 123 to 360 (VVETMAEGLI…DAMIFLKAIP (238 aa)) form the Histidine kinase domain. Residues 247–254 (ELFKNSMR), D286, 305–306 (ST), and 321–326 (GYGYGL) contribute to the ATP site.

This sequence belongs to the PDK/BCKDK protein kinase family.

The protein resides in the mitochondrion matrix. It carries out the reaction L-seryl-[pyruvate dehydrogenase E1 alpha subunit] + ATP = O-phospho-L-seryl-[pyruvate dehydrogenase E1 alpha subunit] + ADP + H(+). Functionally, inhibits the mitochondrial pyruvate dehydrogenase complex by phosphorylation of the E1 alpha subunit, thus contributing to the regulation of glucose metabolism. This chain is [Pyruvate dehydrogenase (acetyl-transferring)] kinase, mitochondrial, found in Ascaris suum (Pig roundworm).